The following is a 987-amino-acid chain: Voltage-gated delayed rectifier potassium channel KCNH1 (987 aa).

Over 1-220 (MTMAGGRKGL…LHYCVFKTTW (220 aa)) the chain is Cytoplasmic. The 81-residue stretch at 14–94 (QNTFLENIVR…QTFENYEMNS (81 aa)) folds into the PAS domain. The region spanning 93–145 (NSFEILMYKKNRTPVWFFVKIAPIRNEQDKVVLFLCTFSDITAFKQPIEDDSC) is the PAC domain. Residues 151–162 (FARLTRALTSSR) form a required for phosphatidylinositol bisphosphate binding region. The helical transmembrane segment at 221–241 (DWIILILTFYTAILVPYNVSF) threads the bilayer. Residues 242–248 (KTRQNNV) are Extracellular-facing. Residues 249–269 (AWLVVDSIVDVIFLVDIVLNF) traverse the membrane as a helical segment. At 270–290 (HTTFVGPAGEVISDPKLIRMN) the chain is on the cytoplasmic side. Residues 291–309 (YLKTWFVIDLLSCLPYDVI) form a helical membrane-spanning segment. Residues 310-345 (NAFENVDEVSAFMGDPGKIGFADQIPPPLEGRESQG) lie on the Extracellular side of the membrane. Residues 346 to 368 (ISSLFSSLKVVRLLRLGRVARKL) form a helical; Voltage-sensor membrane-spanning segment. Residues 369 to 377 (DHYIEYGAA) are Cytoplasmic-facing. Residues 378–399 (VLVLLVCVFGLAAHWMACIWYS) traverse the membrane as a helical segment. The Extracellular portion of the chain corresponds to 400–448 (IGDYEIFDEDTKTIRNNSWLYQLAMDIGTPYQFNGSGSGKWEGGPSKNS). N-linked (GlcNAc...) asparagine glycosylation is found at asparagine 415 and asparagine 433. The segment at residues 449–470 (VYISSLYFTMTSLTSVGFGNIA) is an intramembrane region (pore-forming). The short motif at 463–468 (SVGFGN) is the Selectivity filter element. The Extracellular portion of the chain corresponds to 471 to 477 (PSTDIEK). A helical transmembrane segment spans residues 478-498 (IFAVAIMMIGSLLYATIFGNV). Residues 499 to 987 (TTIFQQMYAN…ESERDIFGAS (489 aa)) are Cytoplasmic-facing. The segment at 673–770 (KRDALQKVLE…LDDLDVEKGS (98 aa)) is calmodulin-binding. Positions 699–701 (YNL) are interaction with cyclic nucleotide-binding pocket. Residues 922 to 962 (AAVLEVKHELKEDIKALSTKMTSIEKQLSEILRILTSRRSS) form a CAD (involved in subunit assembly) region. Residues 960-987 (RSSQSPQELFEISRPQSPESERDIFGAS) form a disordered region. Serine 972, serine 976, and serine 979 each carry phosphoserine. A compositionally biased stretch (basic and acidic residues) spans 978-987 (ESERDIFGAS).

This sequence belongs to the potassium channel family. H (Eag) (TC 1.A.1.20) subfamily. Kv10.1/KCNH1 sub-subfamily. As to quaternary structure, homomultimer. The potassium channel is composed of a homo- or heterotetrameric complex of pore-forming alpha subunits that can associate with modulating beta subunits. Heteromultimer with KCNH5/EAG2. Interacts with ALG10B. Interacts with RABEP1. Interacts (via C-terminus) with CTTN. Interacts (via C-terminal cytoplasmic region) with Ca(2+)-bound calmodulin. Post-translationally, channel activity is regulated via tyrosine phosphorylation/dephosphorylation by SRC and PTPN6. As to expression, detected in cerebellum, cortex and retina.

The protein resides in the cell membrane. It localises to the nucleus inner membrane. Its subcellular location is the cell projection. It is found in the dendrite. The protein localises to the axon. The protein resides in the presynaptic cell membrane. It localises to the perikaryon. Its subcellular location is the postsynaptic density membrane. It is found in the early endosome membrane. It carries out the reaction K(+)(in) = K(+)(out). Its activity is regulated as follows. Channel activity is inhibited by interaction with Ca(2+)-bound calmodulin. Interaction of a single pore-forming alpha subunit with a calmodulin chain is sufficient to promote channel closure. Extracellular magnesium ion concentrations up to 4 mM modulate channel activity by slowing down current activation in a reversible fashion. Channel activity is not regulated by cyclic nucleotides. Channel activity is inhibited by binding intracellular phosphatidylinositol-3,5-bisphosphate and phosphatidylinositol-4,5-bisphosphate (PIP2), but is not inhibited by phosphatidylinositol 4-phosphate. Its function is as follows. Pore-forming (alpha) subunit of a voltage-gated delayed rectifier potassium channel that mediates outward-rectifying potassium currents which, on depolarization, reaches a steady-state level and do not inactivate. The activation kinetics depend on the prepulse potential and external divalent cation concentration. With negative prepulses, the current activation is delayed and slowed down several fold, whereas more positive prepulses speed up activation. The time course of activation is biphasic with a fast and a slowly activating current component. Activates at more positive membrane potentials and exhibit a steeper activation curve. Channel properties are modulated by subunit assembly. Mediates IK(NI) current in myoblasts. Involved in the regulation of cell proliferation and differentiation, in particular adipogenic and osteogenic differentiation in bone marrow-derived mesenchymal stem cells (MSCs). The polypeptide is Voltage-gated delayed rectifier potassium channel KCNH1 (Bos taurus (Bovine)).